A 257-amino-acid chain; its full sequence is NAD-capped RNA hydrolase NudC (257 aa).

Substrate contacts are provided by K25 and R69. 2 residues coordinate Zn(2+): C98 and C101. E111 is a binding site for substrate. The Zn(2+) site is built by C116 and C119. Residue Y124 participates in substrate binding. Residues 125–248 (PQIAPCIIVA…TVARRLIEDT (124 aa)) form the Nudix hydrolase domain. A divalent metal cation-binding residues include A158, E174, and E178. The Nudix box motif lies at 159–180 (GFVEVGETLEQAVAREVMEESG). 192 to 199 (QPWPFPQS) is a binding site for substrate. E219 is an a divalent metal cation binding site. Residue A241 participates in substrate binding.

This sequence belongs to the Nudix hydrolase family. NudC subfamily. Homodimer. It depends on Mg(2+) as a cofactor. Mn(2+) is required as a cofactor. Zn(2+) serves as cofactor.

It catalyses the reaction a 5'-end NAD(+)-phospho-ribonucleoside in mRNA + H2O = a 5'-end phospho-adenosine-phospho-ribonucleoside in mRNA + beta-nicotinamide D-ribonucleotide + 2 H(+). The catalysed reaction is NAD(+) + H2O = beta-nicotinamide D-ribonucleotide + AMP + 2 H(+). The enzyme catalyses NADH + H2O = reduced beta-nicotinamide D-ribonucleotide + AMP + 2 H(+). MRNA decapping enzyme that specifically removes the nicotinamide adenine dinucleotide (NAD) cap from a subset of mRNAs by hydrolyzing the diphosphate linkage to produce nicotinamide mononucleotide (NMN) and 5' monophosphate mRNA. The NAD-cap is present at the 5'-end of some mRNAs and stabilizes RNA against 5'-processing. Has preference for mRNAs with a 5'-end purine. Catalyzes the hydrolysis of a broad range of dinucleotide pyrophosphates. The sequence is that of NAD-capped RNA hydrolase NudC from Shigella boydii serotype 18 (strain CDC 3083-94 / BS512).